We begin with the raw amino-acid sequence, 122 residues long: UPF0102 protein Rleg2_4331 (122 aa).

The protein belongs to the UPF0102 family.

The protein is UPF0102 protein Rleg2_4331 of Rhizobium leguminosarum bv. trifolii (strain WSM2304).